The sequence spans 394 residues: Phosphopentomutase (394 aa).

The Mn(2+) site is built by Asp-14, Asp-287, His-292, Asp-328, His-329, and His-340.

It belongs to the phosphopentomutase family. Requires Mn(2+) as cofactor.

It is found in the cytoplasm. It catalyses the reaction 2-deoxy-alpha-D-ribose 1-phosphate = 2-deoxy-D-ribose 5-phosphate. It carries out the reaction alpha-D-ribose 1-phosphate = D-ribose 5-phosphate. The protein operates within carbohydrate degradation; 2-deoxy-D-ribose 1-phosphate degradation; D-glyceraldehyde 3-phosphate and acetaldehyde from 2-deoxy-alpha-D-ribose 1-phosphate: step 1/2. Its function is as follows. Isomerase that catalyzes the conversion of deoxy-ribose 1-phosphate (dRib-1-P) and ribose 1-phosphate (Rib-1-P) to deoxy-ribose 5-phosphate (dRib-5-P) and ribose 5-phosphate (Rib-5-P), respectively. The chain is Phosphopentomutase from Listeria innocua serovar 6a (strain ATCC BAA-680 / CLIP 11262).